Reading from the N-terminus, the 79-residue chain is Protein AC4 (79 aa).

2 disordered regions span residues 1 to 24 (MCSYSSKANTNARITDSSIWSPQP) and 36 to 79 (LNPA…MPRR). The span at 38-47 (PAPTSSPTST) shows a compositional bias: low complexity. A compositionally biased stretch (polar residues) spans 48–61 (RTEIQLNGENSRST).

Belongs to the geminiviridae protein AC4/C4 family.

Its function is as follows. Pathogenicity determinant. May act as a suppressor of RNA-mediated gene silencing, also known as post-transcriptional gene silencing (PTGS), a mechanism of plant viral defense that limits the accumulation of viral RNAs. The sequence is that of Protein AC4 from Abutilon (Upland cotton).